Here is a 241-residue protein sequence, read N- to C-terminus: Beta-nerve growth factor (241 aa).

The first 18 residues, Met-1–Ala-18, serve as a signal peptide directing secretion. Residues Glu-19–Arg-121 constitute a propeptide that is removed on maturation. N-linked (GlcNAc...) asparagine glycans are attached at residues Asn-69 and Asn-114. Intrachain disulfides connect Cys-136–Cys-201, Cys-179–Cys-229, and Cys-189–Cys-231. 3 residues coordinate a 1-acyl-sn-glycero-3-phospho-(1D-myo-inositol): Arg-171, Tyr-173, and Lys-209. Residue Arg-171 participates in a 1-acyl-sn-glycero-3-phospho-L-serine binding. Lys-209 lines the a 1-acyl-sn-glycero-3-phospho-L-serine pocket.

The protein belongs to the NGF-beta family. In terms of assembly, homodimer. The homodimer interacts with a single NTRK1 chain. The homodimer interacts with a single NGFR chain. The NGF dimer interacts with a single SORCS2 chain (via extracellular domain). The NGF precursor (proNGF) binds to a receptor complex formed by SORT1 and NGFR, which leads to NGF endocytosis. Both mature NGF and the immature NGF precursor (proNGF) interact with SORCS2 and with the heterodimer formed by SORCS2 and NGFR (via extracellular domains). The NGF precursor (proNGF) has much higher affinity for SORCS2 than mature NGF. The NGF precursor (proNGF) has much higher affinity for SORT1 than mature NGF. Interacts with ADAM10 in a divalent cation-dependent manner. Interacts with SORCS3. In terms of tissue distribution, detected in submaxillary gland (at protein level). Highly expressed in male submaxillary gland. Levels are much lower in female submaxillary gland.

Its subcellular location is the secreted. It localises to the endosome lumen. Nerve growth factor is important for the development and maintenance of the sympathetic and sensory nervous systems. Extracellular ligand for the NTRK1 and NGFR receptors, activates cellular signaling cascades to regulate neuronal proliferation, differentiation and survival. The immature NGF precursor (proNGF) functions as a ligand for the heterodimeric receptor formed by SORCS2 and NGFR, and activates cellular signaling cascades that lead to inactivation of RAC1 and/or RAC2, reorganization of the actin cytoskeleton and neuronal growth cone collapse. In contrast to mature NGF, the precursor form (proNGF) promotes neuronal apoptosis (in vitro). Inhibits metalloproteinase-dependent proteolysis of platelet glycoprotein VI. Binds lysophosphatidylinositol and lysophosphatidylserine between the two chains of the homodimer. The lipid-bound form promotes histamine relase from mast cells, contrary to the lipid-free form. In Mus musculus (Mouse), this protein is Beta-nerve growth factor (Ngf).